The sequence spans 561 residues: Transmembrane protein 209 (561 aa).

A phosphoserine mark is found at Ser9 and Ser11. A helical membrane pass occupies residues 28–48 (VVLAWGLLNVSMAGMIYTEMT). The N-linked (GlcNAc...) asparagine glycan is linked to Asn57. The helical transmembrane segment at 60 to 80 (YWPLWYIELALASLFSLNALF) threads the bilayer. Position 98 is a phosphoserine (Ser98). Disordered stretches follow at residues 119–157 (DLAA…FTTS) and 195–234 (FSPS…DKED). Positions 133-157 (SIQGQSVLSYSPSRSPSTSPKFTTS) are enriched in low complexity. Phosphoserine is present on residues Ser201, Ser222, and Ser248. Over residues 220-229 (RSSPTVYNSP) the composition is skewed to polar residues. The disordered stretch occupies residues 250–271 (EEKQHRVKLGSPDSTSPSSSPT). Positions 260-271 (SPDSTSPSSSPT) are enriched in low complexity. An N-linked (GlcNAc...) asparagine glycan is attached at Asn274. Ser278 is modified (phosphoserine).

Interacts with NUP205. As to expression, expressed in the testis.

The protein resides in the membrane. It localises to the nucleus envelope. It is found in the golgi apparatus. The protein localises to the cytoplasm. In terms of biological role, nuclear envelope protein which in association with NUP205, may be involved in nuclear transport of various nuclear proteins in addition to MYC. The protein is Transmembrane protein 209 (TMEM209) of Homo sapiens (Human).